We begin with the raw amino-acid sequence, 735 residues long: Coiled-coil quantitatively-enriched protein 1 (735 aa).

A coiled-coil region spans residues Ala514–Leu719.

As to quaternary structure, interacts (during meiosis) with pcp1. Interacts with clr3, pot1, taz1 and tpz1.

It localises to the nucleus. Its subcellular location is the nucleoplasm. It is found in the chromosome. The protein localises to the telomere. In terms of biological role, component of the meiotic bouquet that facilitates meiotic nuclear reorganization of the telomeres to the centrosome. Links telomeres to the meiotic centrosome component pcp1. Essential for the formation of normal telomere clusters during meiotic prophase. Required for telomere length regulation and chromosome segregation. Required for proper positioning of nucleosomes at heterochromatic loci and for transcriptional gene silencing (TGS) function of the Snf2/Hdac-containing repressor complex (SHREC). The polypeptide is Coiled-coil quantitatively-enriched protein 1 (ccq1) (Schizosaccharomyces pombe (strain 972 / ATCC 24843) (Fission yeast)).